A 345-amino-acid chain; its full sequence is GTP cyclohydrolase-2 (345 aa).

The segment at 1 to 27 (MTIDNYDNSKQDSSKYEVSGTGDGRNG) is disordered. 143-147 (RIHSE) contributes to the GTP binding site. Zn(2+) is bound by residues Cys148, Cys159, and Cys161. GTP contacts are provided by residues Gln164, 197-199 (EGR), and Thr219. The active-site Proton acceptor is the Asp231. The active-site Nucleophile is Arg233. The GTP site is built by Thr254 and Lys259. The disordered stretch occupies residues 312–345 (PLKLHTNPQPTETSEAQNQNRMNSALSSTSTLAI). The span at 317–345 (TNPQPTETSEAQNQNRMNSALSSTSTLAI) shows a compositional bias: polar residues.

Belongs to the GTP cyclohydrolase II family. The cofactor is Zn(2+).

The enzyme catalyses GTP + 4 H2O = 2,5-diamino-6-hydroxy-4-(5-phosphoribosylamino)-pyrimidine + formate + 2 phosphate + 3 H(+). Its pathway is cofactor biosynthesis; riboflavin biosynthesis; 5-amino-6-(D-ribitylamino)uracil from GTP: step 1/4. Functionally, catalyzes the conversion of GTP to 2,5-diamino-6-ribosylamino-4(3H)-pyrimidinone 5'-phosphate (DARP), formate and pyrophosphate. This is GTP cyclohydrolase-2 (RIB1) from Saccharomyces cerevisiae (strain ATCC 204508 / S288c) (Baker's yeast).